Reading from the N-terminus, the 461-residue chain is tRNA modification GTPase MnmE (461 aa).

Residues R23, E84, and K123 each contribute to the (6S)-5-formyl-5,6,7,8-tetrahydrofolate site. One can recognise a TrmE-type G domain in the interval 219–382 (GVQVVIGGRP…LLDHLTDTVA (164 aa)). Residues 229–234 (NAGKST), 248–254 (SETPGTT), 273–276 (DTAG), and 337–340 (NKAD) contribute to the GTP site. Mg(2+) is bound by residues S233 and T254. K461 provides a ligand contact to (6S)-5-formyl-5,6,7,8-tetrahydrofolate.

Belongs to the TRAFAC class TrmE-Era-EngA-EngB-Septin-like GTPase superfamily. TrmE GTPase family. Homodimer. Heterotetramer of two MnmE and two MnmG subunits. K(+) serves as cofactor.

The protein resides in the cytoplasm. In terms of biological role, exhibits a very high intrinsic GTPase hydrolysis rate. Involved in the addition of a carboxymethylaminomethyl (cmnm) group at the wobble position (U34) of certain tRNAs, forming tRNA-cmnm(5)s(2)U34. This Salinibacter ruber (strain DSM 13855 / M31) protein is tRNA modification GTPase MnmE.